We begin with the raw amino-acid sequence, 169 residues long: MTAILITGYRSFEIGIFDHKDPRVSIIKQAIRKDLIGYLENGVDWFIFTGNLGFEQWALEVANELKEEYPLQIATIFLFETHGDKWNEKNQEVLSQFRAVDFVKYYFPNYEQPTQFSQYYQFLLEKTEGAYVFYDTENETNLKYFLKKAKDMPHYQLLLLTFDRLNDMS.

This sequence belongs to the UPF0398 family.

This chain is UPF0398 protein Spy49_1277c, found in Streptococcus pyogenes serotype M49 (strain NZ131).